We begin with the raw amino-acid sequence, 998 residues long: MIGVDMKLETLVNNGPAVIFLCRAETGWPVETVTANIVRFGYSPKDFISGGLGYADIIYPADLEIAVSQFFSYVEKDYIGKDLDYKVEYREYKGEAGEHKRNGKGNIGKDRGGYDSFTQQYRLLNKSGDVLWVEAEIKVLEEEEGKAGLFQVTVFDISRWKHTEKAMPAALDTENELKRIINSGHVIVFLWRAEPGWPVDFVSENISELGYTPEDFTSGRIVYTDIIHPDDLDNVRAEVSKNTEEGRDYFSKEYRVLAKSGEVRYVDERTLIRRNEKGEITCYQGILLDITQRKEAEELILSQNRVLERIASGASLDEVLLLLVNYAEEMKPGLLCTVMLLDREQKRLFYGACPSLPKLYSKAINGIQVQVNSETAGTAAGTGKRVIVGNIMKDPFCEECREIAQKVGLKACWAEPIFSSGGEVLGVFTIYLRETRKPREEELEFIRTNAYLAGIAIEHVQAADALKESENRFRTIFDNINDQLYIREPDGISYMDVNQVVVDRLGYSKEEILNMKAEEIIPSEYWASVRENMQKIKAEGSRIFEAGAVCKGGTVIPLEVSARIIDYGGKKTIFSVSRDITERKKAEVAQRLNGSRLEALVKLDQMAGASLKEITDFAREEAVRLTGSKLGYLAFMDAYESTLVMHSWSDSAMEECSIEDKQFVYPVKSMGLWGEAVRQRKPIITNDYPAPNPLKKGYPKNHVHLIRHLNIPVFDGKRIVAVAGVGNKEENYDESDVRQLTLLMQGMWQLIQRKQLEEALRTYSGELSRANEELRSVNMMKTEFVEEMMFPEKAEYGEIMDYETLYAIDSQQQKAVNTFIHYSEKLRRLVDSLLYQSLEKAGKIDYSFEETQLKDVLSDAFLNNVFLIGEKALEVKKEVSASLSEIKGDREKLTALFTALIDHAIKFTPQGGKLALEVKEEAGNVHIVIADSGKGISKELIPYLFDRLYQVNDSITRRYQGLESGLYICKNIVDAHKGEIWFESEEGLGNLMHVKLPK.

The PAS 1 domain occupies 40-77 (FGYSPKDFISGGLGYADIIYPADLEIAVSQFFSYVEKD). One can recognise a PAC 1 domain in the interval 117 to 169 (FTQQYRLLNKSGDVLWVEAEIKVLEEEEGKAGLFQVTVFDISRWKHTEKAMPA). The PAS 2 domain occupies 209 to 246 (LGYTPEDFTSGRIVYTDIIHPDDLDNVRAEVSKNTEEG). The region spanning 250–302 (FSKEYRVLAKSGEVRYVDERTLIRRNEKGEITCYQGILLDITQRKEAEELILS) is the PAC 2 domain. The GAF 1 domain occupies 314–458 (ASLDEVLLLL…NAYLAGIAIE (145 aa)). The region spanning 469-540 (SENRFRTIFD…ENMQKIKAEG (72 aa)) is the PAS 3 domain. One can recognise a GAF 2 domain in the interval 609-752 (ASLKEITDFA…LMQGMWQLIQ (144 aa)). Cys-656 contacts heme. The Histidine kinase domain occupies 783–998 (EFVEEMMFPE…GNLMHVKLPK (216 aa)).

Heme serves as cofactor. Post-translationally, autophosphorylates: autophosphorylation is dependent on the redox state of heme cofactor and is promoted upon reduction.

Its subcellular location is the cytoplasm. The catalysed reaction is ATP + protein L-histidine = ADP + protein N-phospho-L-histidine.. In terms of biological role, heme-binding sensor kinase component part of a two-component regulatory system involved in methyl sulfide metabolism. Does not act as a phytochrome-like photoreceptor. The sequence is that of Methyl sulfide methyltransferase-associated sensor (msmS) from Methanosarcina acetivorans (strain ATCC 35395 / DSM 2834 / JCM 12185 / C2A).